The primary structure comprises 128 residues: 2-iminobutanoate/2-iminopropanoate deaminase (128 aa).

The protein belongs to the RutC family.

Its subcellular location is the cytoplasm. The enzyme catalyses 2-iminobutanoate + H2O = 2-oxobutanoate + NH4(+). The catalysed reaction is 2-iminopropanoate + H2O = pyruvate + NH4(+). Functionally, catalyzes the hydrolytic deamination of enamine/imine intermediates that form during the course of normal metabolism. May facilitate the release of ammonia from these potentially toxic reactive metabolites, reducing their impact on cellular components. It may act on enamine/imine intermediates formed by several types of pyridoxal-5'-phosphate-dependent dehydratases including L-threonine dehydratase. Preferentially digests Leu and Met in cooperation with L-amino acid oxidase, but digests Phe poorly. In Dermatophagoides farinae (American house dust mite), this protein is 2-iminobutanoate/2-iminopropanoate deaminase.